The primary structure comprises 106 residues: uncharacterized protein (106 aa).

It to the N-terminal of E.carotovora exoenzyme regulation regulon ORF1. The C-terminal part is colinear with YqcB. The protein to E.coli YqcC.

This is an uncharacterized protein from Haemophilus influenzae (strain ATCC 51907 / DSM 11121 / KW20 / Rd).